The following is a 320-amino-acid chain: ATP-dependent 6-phosphofructokinase (320 aa).

Gly12 provides a ligand contact to ATP. Position 22-26 (22-26 (RGVVR)) interacts with ADP. Residues 73 to 74 (RF) and 103 to 106 (GDGS) contribute to the ATP site. Position 104 (Asp104) interacts with Mg(2+). A substrate-binding site is contributed by 126–128 (TID). Asp128 serves as the catalytic Proton acceptor. Residue Arg155 participates in ADP binding. Residues Arg163 and 170–172 (MGR) contribute to the substrate site. ADP-binding positions include 186 to 188 (GCE), Lys212, and 214 to 216 (KKH). Residues Glu223, Arg244, and 250–253 (HIQR) contribute to the substrate site.

Belongs to the phosphofructokinase type A (PFKA) family. ATP-dependent PFK group I subfamily. Prokaryotic clade 'B1' sub-subfamily. In terms of assembly, homotetramer. The cofactor is Mg(2+).

The protein resides in the cytoplasm. The catalysed reaction is beta-D-fructose 6-phosphate + ATP = beta-D-fructose 1,6-bisphosphate + ADP + H(+). It participates in carbohydrate degradation; glycolysis; D-glyceraldehyde 3-phosphate and glycerone phosphate from D-glucose: step 3/4. With respect to regulation, allosterically activated by ADP and other diphosphonucleosides, and allosterically inhibited by phosphoenolpyruvate. Functionally, catalyzes the phosphorylation of D-fructose 6-phosphate to fructose 1,6-bisphosphate by ATP, the first committing step of glycolysis. The polypeptide is ATP-dependent 6-phosphofructokinase (Blochmanniella floridana).